Consider the following 127-residue polypeptide: Classical arabinogalactan protein 10 (127 aa).

An N-terminal signal peptide occupies residues 1-21; sequence MASKSVVVLLFLALIASSAIA. A Pyrrolidone carboxylic acid modification is found at Q22. A disordered region spans residues 22–107; the sequence is QAPGPAPTRS…TGSTPVDNNN (86 aa). 4-hydroxyproline is present on residues P24, P26, P28, P32, and P36. Residues P24, P26, P28, P32, and P36 are each glycosylated (O-linked (Ara...) hydroxyproline). 3 stretches are compositionally biased toward pro residues: residues 25-39, 48-58, and 66-86; these read GPAP…PAQP, SITPTPTPTPS, and VSPP…PPTS. Positions 98 to 107 are enriched in polar residues; the sequence is TGSTPVDNNN. N107 is lipidated: GPI-anchor amidated asparagine. A propeptide spans 108-127 (removed in mature form); sequence AATLAAGSLAGFVFVASLLL.

Belongs to the classical AGP family. In terms of processing, O-glycosylated on hydroxyprolines; noncontiguous hydroxylproline residues are glycosylated with arabinogalactan. Predominantly expressed in flowers and at a lower level in roots and siliques.

It is found in the cell membrane. In terms of biological role, proteoglycan that seems to be implicated in diverse developmental roles such as differentiation, cell-cell recognition, embryogenesis and programmed cell death. The polypeptide is Classical arabinogalactan protein 10 (AGP10) (Arabidopsis thaliana (Mouse-ear cress)).